Reading from the N-terminus, the 106-residue chain is Large ribosomal subunit protein uL24 (106 aa).

Belongs to the universal ribosomal protein uL24 family. In terms of assembly, part of the 50S ribosomal subunit.

Its function is as follows. One of two assembly initiator proteins, it binds directly to the 5'-end of the 23S rRNA, where it nucleates assembly of the 50S subunit. One of the proteins that surrounds the polypeptide exit tunnel on the outside of the subunit. The polypeptide is Large ribosomal subunit protein uL24 (Albidiferax ferrireducens (strain ATCC BAA-621 / DSM 15236 / T118) (Rhodoferax ferrireducens)).